Here is a 193-residue protein sequence, read N- to C-terminus: Putative tail protein (193 aa).

The protein localises to the virion. The chain is Putative tail protein from Staphylococcus phage phiMR25.